Reading from the N-terminus, the 169-residue chain is ATP synthase subunit b (169 aa).

A helical transmembrane segment spans residues 11-31; it reads IPSFIAQVVNFGLLLGLLYLF.

It belongs to the ATPase B chain family. In terms of assembly, F-type ATPases have 2 components, F(1) - the catalytic core - and F(0) - the membrane proton channel. F(1) has five subunits: alpha(3), beta(3), gamma(1), delta(1), epsilon(1). F(0) has three main subunits: a(1), b(2) and c(10-14). The alpha and beta chains form an alternating ring which encloses part of the gamma chain. F(1) is attached to F(0) by a central stalk formed by the gamma and epsilon chains, while a peripheral stalk is formed by the delta and b chains.

The protein localises to the cell membrane. Its function is as follows. F(1)F(0) ATP synthase produces ATP from ADP in the presence of a proton or sodium gradient. F-type ATPases consist of two structural domains, F(1) containing the extramembraneous catalytic core and F(0) containing the membrane proton channel, linked together by a central stalk and a peripheral stalk. During catalysis, ATP synthesis in the catalytic domain of F(1) is coupled via a rotary mechanism of the central stalk subunits to proton translocation. Component of the F(0) channel, it forms part of the peripheral stalk, linking F(1) to F(0). This chain is ATP synthase subunit b, found in Dehalococcoides mccartyi (strain ATCC BAA-2266 / KCTC 15142 / 195) (Dehalococcoides ethenogenes (strain 195)).